The sequence spans 295 residues: Ribosomal protein L11 methyltransferase (295 aa).

Residues threonine 150, glycine 171, aspartate 193, and asparagine 232 each contribute to the S-adenosyl-L-methionine site.

Belongs to the methyltransferase superfamily. PrmA family.

It localises to the cytoplasm. The catalysed reaction is L-lysyl-[protein] + 3 S-adenosyl-L-methionine = N(6),N(6),N(6)-trimethyl-L-lysyl-[protein] + 3 S-adenosyl-L-homocysteine + 3 H(+). In terms of biological role, methylates ribosomal protein L11. The sequence is that of Ribosomal protein L11 methyltransferase from Neisseria gonorrhoeae (strain ATCC 700825 / FA 1090).